A 679-amino-acid polypeptide reads, in one-letter code: Protein hook (679 aa).

Positions 5 to 123 constitute a Calponin-homology (CH) domain; sequence NGMYYSLLEW…RLLQLVLGCA (119 aa). The stretch at 140–627 forms a coiled coil; it reads EEELQANIMR…SKTKMSTMEE (488 aa).

The protein belongs to the hook family. As to quaternary structure, homodimer. Interacts with microtubules via its N-terminus.

The protein localises to the cytoplasm. The protein resides in the cytoskeleton. It is found in the endosome. It localises to the synapse. In terms of biological role, involved in endocytic trafficking by stabilizing organelles of the endocytic pathway. Probably acts as a cytoskeletal linker protein required to tether endosome vesicles to the cytoskeleton. Involved in modulation of endocytosis at stages required for down-regulation of membrane proteins that control synapse size. Not involved in synaptic vesicle recycling. Required in R7 cells for boss endocytosis into multivesicular bodies (MVBs). Has a role in regulating adult longevity. This chain is Protein hook, found in Drosophila mojavensis (Fruit fly).